A 688-amino-acid chain; its full sequence is Chaperone protein dnaK1 (688 aa).

Position 198 is a phosphothreonine; by autocatalysis (threonine 198). Over residues 630–661 (DLPRDSYRERDAYNNRDYGRDYGRDYGRDSRP) the composition is skewed to basic and acidic residues. The disordered stretch occupies residues 630–688 (DLPRDSYRERDAYNNRDYGRDYGRDYGRDSRPSYDNSRPPRKSPRPSYQDNWDDDDDWL).

Belongs to the heat shock protein 70 family.

Its function is as follows. Acts as a chaperone. In Nostoc sp. (strain PCC 7120 / SAG 25.82 / UTEX 2576), this protein is Chaperone protein dnaK1 (dnaK1).